Here is a 280-residue protein sequence, read N- to C-terminus: Nucleotide-binding protein Dgeo_0723 (280 aa).

An ATP-binding site is contributed by 8–15 (GLSGSGKS). 57–60 (DART) is a binding site for GTP.

This sequence belongs to the RapZ-like family.

Its function is as follows. Displays ATPase and GTPase activities. This chain is Nucleotide-binding protein Dgeo_0723, found in Deinococcus geothermalis (strain DSM 11300 / CIP 105573 / AG-3a).